The primary structure comprises 349 residues: UDP-N-acetylenolpyruvoylglucosamine reductase (349 aa).

The region spanning 25 to 197 is the FAD-binding PCMH-type domain; that stretch reads GIAATARYAA…VAVTFRLPKR (173 aa). Residue R173 is part of the active site. The active-site Proton donor is S249. E345 is a catalytic residue.

This sequence belongs to the MurB family. It depends on FAD as a cofactor.

Its subcellular location is the cytoplasm. The catalysed reaction is UDP-N-acetyl-alpha-D-muramate + NADP(+) = UDP-N-acetyl-3-O-(1-carboxyvinyl)-alpha-D-glucosamine + NADPH + H(+). It participates in cell wall biogenesis; peptidoglycan biosynthesis. Cell wall formation. In Burkholderia vietnamiensis (strain G4 / LMG 22486) (Burkholderia cepacia (strain R1808)), this protein is UDP-N-acetylenolpyruvoylglucosamine reductase.